The following is a 546-amino-acid chain: Chaperonin GroEL (546 aa).

ATP-binding positions include 30–33 (TLGP), Lys51, 87–91 (DGTTT), Gly415, and Asp495.

This sequence belongs to the chaperonin (HSP60) family. As to quaternary structure, forms a cylinder of 14 subunits composed of two heptameric rings stacked back-to-back. Interacts with the co-chaperonin GroES.

Its subcellular location is the cytoplasm. The enzyme catalyses ATP + H2O + a folded polypeptide = ADP + phosphate + an unfolded polypeptide.. Its function is as follows. Together with its co-chaperonin GroES, plays an essential role in assisting protein folding. The GroEL-GroES system forms a nano-cage that allows encapsulation of the non-native substrate proteins and provides a physical environment optimized to promote and accelerate protein folding. The sequence is that of Chaperonin GroEL from Brucella ovis (strain ATCC 25840 / 63/290 / NCTC 10512).